The primary structure comprises 629 residues: Chaperone protein HtpG (629 aa).

The interval 1–335 (MSEVETSVEK…TADLPLNVSR (335 aa)) is a; substrate-binding. A b region spans residues 336–551 (EMIQESPLLA…EQGPDRQLQK (216 aa)). The c stretch occupies residues 552–629 (MLQDAGRIEG…SRVFGRALKE (78 aa)).

This sequence belongs to the heat shock protein 90 family. Homodimer.

The protein localises to the cytoplasm. Molecular chaperone. Has ATPase activity. This chain is Chaperone protein HtpG, found in Rhizobium meliloti (strain 1021) (Ensifer meliloti).